A 171-amino-acid polypeptide reads, in one-letter code: 3-hydroxydecanoyl-[acyl-carrier-protein] dehydratase (171 aa).

His-70 is an active-site residue.

The protein belongs to the thioester dehydratase family. FabA subfamily. As to quaternary structure, homodimer.

The protein resides in the cytoplasm. It carries out the reaction a (3R)-hydroxyacyl-[ACP] = a (2E)-enoyl-[ACP] + H2O. The enzyme catalyses (3R)-hydroxydecanoyl-[ACP] = (2E)-decenoyl-[ACP] + H2O. The catalysed reaction is (2E)-decenoyl-[ACP] = (3Z)-decenoyl-[ACP]. The protein operates within lipid metabolism; fatty acid biosynthesis. In terms of biological role, necessary for the introduction of cis unsaturation into fatty acids. Catalyzes the dehydration of (3R)-3-hydroxydecanoyl-ACP to E-(2)-decenoyl-ACP and then its isomerization to Z-(3)-decenoyl-ACP. Can catalyze the dehydratase reaction for beta-hydroxyacyl-ACPs with saturated chain lengths up to 16:0, being most active on intermediate chain length. This chain is 3-hydroxydecanoyl-[acyl-carrier-protein] dehydratase, found in Mesorhizobium japonicum (strain LMG 29417 / CECT 9101 / MAFF 303099) (Mesorhizobium loti (strain MAFF 303099)).